We begin with the raw amino-acid sequence, 99 residues long: Aspartyl/glutamyl-tRNA(Asn/Gln) amidotransferase subunit C (99 aa).

Belongs to the GatC family. Heterotrimer of A, B and C subunits.

The catalysed reaction is L-glutamyl-tRNA(Gln) + L-glutamine + ATP + H2O = L-glutaminyl-tRNA(Gln) + L-glutamate + ADP + phosphate + H(+). It catalyses the reaction L-aspartyl-tRNA(Asn) + L-glutamine + ATP + H2O = L-asparaginyl-tRNA(Asn) + L-glutamate + ADP + phosphate + 2 H(+). In terms of biological role, allows the formation of correctly charged Asn-tRNA(Asn) or Gln-tRNA(Gln) through the transamidation of misacylated Asp-tRNA(Asn) or Glu-tRNA(Gln) in organisms which lack either or both of asparaginyl-tRNA or glutaminyl-tRNA synthetases. The reaction takes place in the presence of glutamine and ATP through an activated phospho-Asp-tRNA(Asn) or phospho-Glu-tRNA(Gln). This Rhodococcus opacus (strain B4) protein is Aspartyl/glutamyl-tRNA(Asn/Gln) amidotransferase subunit C.